A 670-amino-acid chain; its full sequence is Oxidoreductase PigB (670 aa).

Positions 1 to 19 (MIIQRLFGILYMLAGLAKA) are cleaved as a signal peptide. 4 consecutive transmembrane segments (helical) span residues 53-73 (GDVI…ILML), 76-96 (LWTT…VVIL), 98-118 (QSQP…LYML), and 238-258 (LVFF…VGFI).

Belongs to the flavin monoamine oxidase family. It depends on FAD as a cofactor.

It is found in the membrane. The protein operates within antibiotic biosynthesis; prodigiosin biosynthesis. In terms of biological role, involved in the biosynthesis of 2-methyl-3-n-amyl-pyrrole (MAP), one of the terminal products involved in the biosynthesis of the red antibiotic prodigiosin (Pig). Catalyzes the oxidation of dihydro form of MAP (H2MAP) to yield MAP. The polypeptide is Oxidoreductase PigB (Serratia sp. (strain ATCC 39006) (Prodigiosinella confusarubida)).